The sequence spans 212 residues: MRSLSRTDQVISSLDKALSTVFAAHSASRPAPKPAVDPGLAMTPQDKSLSASLMRVNHVGEVCAQALYASQALGTRNETLRAQFEHAAREETDHLAWTEARLAELNGRTSWLNPLWYAGAFGLGLIAGRLGDAASLGFVVETERQVEQHLLQHLDRLPVADVESRAIVAQMREDEARHAAAAEHAGAATLPVPVRWMMRGMAKLMTSTAHRI.

Fe cation contacts are provided by E61, E91, H94, E143, E175, and H178.

This sequence belongs to the COQ7 family. Fe cation is required as a cofactor.

It localises to the cell membrane. The enzyme catalyses a 5-methoxy-2-methyl-3-(all-trans-polyprenyl)benzene-1,4-diol + AH2 + O2 = a 3-demethylubiquinol + A + H2O. Its pathway is cofactor biosynthesis; ubiquinone biosynthesis. Functionally, catalyzes the hydroxylation of 2-nonaprenyl-3-methyl-6-methoxy-1,4-benzoquinol during ubiquinone biosynthesis. This Methylibium petroleiphilum (strain ATCC BAA-1232 / LMG 22953 / PM1) protein is 3-demethoxyubiquinol 3-hydroxylase.